Reading from the N-terminus, the 635-residue chain is 1-deoxy-D-xylulose-5-phosphate synthase (635 aa).

Thiamine diphosphate is bound by residues His76 and 117–119 (GHS). A Mg(2+)-binding site is contributed by Asp148. Residues 149-150 (GA), Asn177, Tyr294, and Glu379 each bind thiamine diphosphate. Asn177 contacts Mg(2+).

Belongs to the transketolase family. DXPS subfamily. In terms of assembly, homodimer. Mg(2+) is required as a cofactor. Requires thiamine diphosphate as cofactor.

It catalyses the reaction D-glyceraldehyde 3-phosphate + pyruvate + H(+) = 1-deoxy-D-xylulose 5-phosphate + CO2. The protein operates within metabolic intermediate biosynthesis; 1-deoxy-D-xylulose 5-phosphate biosynthesis; 1-deoxy-D-xylulose 5-phosphate from D-glyceraldehyde 3-phosphate and pyruvate: step 1/1. Functionally, catalyzes the acyloin condensation reaction between C atoms 2 and 3 of pyruvate and glyceraldehyde 3-phosphate to yield 1-deoxy-D-xylulose-5-phosphate (DXP). This chain is 1-deoxy-D-xylulose-5-phosphate synthase, found in Neisseria meningitidis serogroup C (strain 053442).